A 419-amino-acid polypeptide reads, in one-letter code: Gamma-glutamyl phosphate reductase (419 aa).

It belongs to the gamma-glutamyl phosphate reductase family.

Its subcellular location is the cytoplasm. The enzyme catalyses L-glutamate 5-semialdehyde + phosphate + NADP(+) = L-glutamyl 5-phosphate + NADPH + H(+). Its pathway is amino-acid biosynthesis; L-proline biosynthesis; L-glutamate 5-semialdehyde from L-glutamate: step 2/2. Functionally, catalyzes the NADPH-dependent reduction of L-glutamate 5-phosphate into L-glutamate 5-semialdehyde and phosphate. The product spontaneously undergoes cyclization to form 1-pyrroline-5-carboxylate. The sequence is that of Gamma-glutamyl phosphate reductase from Caldicellulosiruptor saccharolyticus (strain ATCC 43494 / DSM 8903 / Tp8T 6331).